A 317-amino-acid chain; its full sequence is Methionyl-tRNA formyltransferase (317 aa).

113 to 116 (SLLP) lines the (6S)-5,6,7,8-tetrahydrofolate pocket.

The protein belongs to the Fmt family.

It carries out the reaction L-methionyl-tRNA(fMet) + (6R)-10-formyltetrahydrofolate = N-formyl-L-methionyl-tRNA(fMet) + (6S)-5,6,7,8-tetrahydrofolate + H(+). Attaches a formyl group to the free amino group of methionyl-tRNA(fMet). The formyl group appears to play a dual role in the initiator identity of N-formylmethionyl-tRNA by promoting its recognition by IF2 and preventing the misappropriation of this tRNA by the elongation apparatus. The protein is Methionyl-tRNA formyltransferase of Pseudomonas fluorescens (strain SBW25).